A 123-amino-acid chain; its full sequence is Small ribosomal subunit protein uS12 (123 aa).

Asp-89 is modified (3-methylthioaspartic acid).

Belongs to the universal ribosomal protein uS12 family. In terms of assembly, part of the 30S ribosomal subunit. Contacts proteins S8 and S17. May interact with IF1 in the 30S initiation complex.

Its function is as follows. With S4 and S5 plays an important role in translational accuracy. In terms of biological role, interacts with and stabilizes bases of the 16S rRNA that are involved in tRNA selection in the A site and with the mRNA backbone. Located at the interface of the 30S and 50S subunits, it traverses the body of the 30S subunit contacting proteins on the other side and probably holding the rRNA structure together. The combined cluster of proteins S8, S12 and S17 appears to hold together the shoulder and platform of the 30S subunit. The protein is Small ribosomal subunit protein uS12 of Anaeromyxobacter dehalogenans (strain 2CP-1 / ATCC BAA-258).